The following is a 648-amino-acid chain: Leucine-rich repeat and WD repeat-containing protein 1 (648 aa).

4 LRR repeats span residues 22 to 43 (KIQS…PNLL), 48 to 69 (KLRE…LGLS), 70 to 91 (HLRI…HQFP), and 92 to 113 (ELEE…LKVS). Residues 214–262 (VEHPQAAGASKFRAREVASKRPGKDPVTLPPSKRVRALPPAQAEGSPMG) are disordered. Over residues 226–237 (RAREVASKRPGK) the composition is skewed to basic and acidic residues. Phosphoserine is present on Ser-259. WD repeat units lie at residues 392-432 (AHKK…QDYK), 443-482 (CGSV…PQKQ), 497-536 (VSGQ…AGRG), 541-592 (LPVV…KEPP), and 616-648 (VTKT…WRRC).

This sequence belongs to the LRWD1 family. Integral component of the ORC complex. Directly interacts with CDT1, GMNN and ORC2. Interacts with ORC2 only when non-ubiquitinated; this interaction prevents LRWD1 ubiquitination and degradation. Some of these interactions are regulated in a cell-cycle dependent manner. Interaction with ORC1 occurs predominantly during G1. Association with phosphorylated ORC1 during mitosis is not efficient. Interaction with CDT1 occurs during G1 phase, as well as during mitosis with phosphorylated CDT1. Interaction with GMNN occurs from G1/S to mitosis. Interaction with ORC2 is observed throughout the cell cycle. The stoichiometry of the ORCA/ORC/CDT1/GMNN complex is 1:1:1:2. Interacts with CUL4A and DDB1; this interaction may lead to ubiquitination. Post-translationally, ubiquitinated; undergoes 'Lys-48'-linked polyubiquitination leading to proteasomal degradation. Ubiquitination occurs within the WD repeats at the end of the G1 phase. Ubiquitination may be catalyzed by the CUL4-DDB1 E3 ubiquitin-protein ligase complex and other E3 ligases. Testis-specific.

The protein localises to the nucleus. Its subcellular location is the chromosome. The protein resides in the centromere. It localises to the telomere. It is found in the cytoplasm. The protein localises to the cytoskeleton. Its subcellular location is the microtubule organizing center. The protein resides in the centrosome. It localises to the kinetochore. In terms of biological role, required for G1/S transition. Recruits and stabilizes the origin recognition complex (ORC) onto chromatin during G1 to establish pre-replication complex (preRC) and to heterochromatic sites in post-replicated cells. Binds a combination of DNA and histone methylation repressive marks on heterochromatin. Binds histone H3 and H4 trimethylation marks H3K9me3, H3K27me3 and H4K20me3 in a cooperative manner with DNA methylation. Required for silencing of major satellite repeats. May be important ORC2, ORC3 and ORC4 stability. This chain is Leucine-rich repeat and WD repeat-containing protein 1 (LRWD1), found in Mus musculus (Mouse).